The chain runs to 205 residues: Large ribosomal subunit protein uL4 (205 aa).

Belongs to the universal ribosomal protein uL4 family. Part of the 50S ribosomal subunit. Contacts proteins L15 and L34.

In terms of biological role, one of the primary rRNA binding proteins, this protein initially binds near the 5'-end of the 23S rRNA. It is important during the early stages of 50S assembly. Makes multiple contacts with different domains of the 23S rRNA in the assembled 50S subunit. Its function is as follows. This protein is located close to the polypeptide exit tunnel, and interacts with the modified macrolide azithromycin, which blocks the tunnel. The polypeptide is Large ribosomal subunit protein uL4 (rplD) (Deinococcus radiodurans (strain ATCC 13939 / DSM 20539 / JCM 16871 / CCUG 27074 / LMG 4051 / NBRC 15346 / NCIMB 9279 / VKM B-1422 / R1)).